A 539-amino-acid chain; its full sequence is Glucose-6-phosphate isomerase (539 aa).

Glu349 (proton donor) is an active-site residue. Catalysis depends on residues His380 and Lys508. The segment at 519-539 (ESGASGQHDPSTAGLIQRLKR) is disordered.

It belongs to the GPI family.

Its subcellular location is the cytoplasm. The enzyme catalyses alpha-D-glucose 6-phosphate = beta-D-fructose 6-phosphate. The protein operates within carbohydrate biosynthesis; gluconeogenesis. Its pathway is carbohydrate degradation; glycolysis; D-glyceraldehyde 3-phosphate and glycerone phosphate from D-glucose: step 2/4. In terms of biological role, catalyzes the reversible isomerization of glucose-6-phosphate to fructose-6-phosphate. In Caulobacter vibrioides (strain ATCC 19089 / CIP 103742 / CB 15) (Caulobacter crescentus), this protein is Glucose-6-phosphate isomerase.